The chain runs to 261 residues: Prostatic glandular kallikrein-6 (261 aa).

Residues 1–18 form the signal peptide; that stretch reads MWLLILFLILSLGWNDAA. The propeptide at 19-24 is activation peptide; sequence PPGQSR. The 234-residue stretch at 25-258 folds into the Peptidase S1 domain; the sequence is IIGGFNCEKN…FTSWMKKVMK (234 aa). 5 cysteine pairs are disulfide-bonded: Cys31–Cys173, Cys50–Cys66, Cys152–Cys219, Cys184–Cys198, and Cys209–Cys234. The active-site Charge relay system is His65. Asn108 carries an N-linked (GlcNAc...) asparagine glycan. The active-site Charge relay system is Asp120. The active-site Charge relay system is the Ser213.

It belongs to the peptidase S1 family. Kallikrein subfamily.

The enzyme catalyses Preferential cleavage of Arg-|-Xaa bonds in small molecule substrates. Highly selective action to release kallidin (lysyl-bradykinin) from kininogen involves hydrolysis of Met-|-Xaa or Leu-|-Xaa.. Its function is as follows. Glandular kallikreins cleave Met-Lys and Arg-Ser bonds in kininogen to release Lys-bradykinin. The chain is Prostatic glandular kallikrein-6 (Klk6) from Rattus norvegicus (Rat).